The primary structure comprises 199 residues: MSDFQKSFSESTSSIKFDEKYIDNSVQPNDIGVAEQWAVKTVADPCVGNLATPVNSGYFTKAFINNLPFYREGISPNFRGLETGAAFGYLLYGPFTMTGPLRNSEFALTAGLLAAIGAVHILTALLVLYNAPGKAPNVQPPDATVNNPPKDLFTRAGWADFTSGFWLGGCGGSVFAWLLVGTLHLDTIMPIIKNIWTAG.

2 helical membrane passes run 108 to 128 (LTAGLLAAIGAVHILTALLVL) and 165 to 185 (FWLGGCGGSVFAWLLVGTLHL).

Belongs to the PsaL family.

It localises to the cellular thylakoid membrane. The sequence is that of Photosystem I reaction center subunit XI from Prochlorococcus marinus (strain AS9601).